Here is a 435-residue protein sequence, read N- to C-terminus: Methanethiol oxidase (435 aa).

An N-terminal signal peptide occupies residues Met1–Ala24.

This sequence belongs to the selenium-binding protein family. As to quaternary structure, homotetramer. It depends on Cu cation as a cofactor.

The protein localises to the periplasm. It carries out the reaction methanethiol + O2 + H2O = hydrogen sulfide + formaldehyde + H2O2 + H(+). It participates in organosulfur degradation. Its activity is regulated as follows. Inhibited by EDTA but not by EGTA. In terms of biological role, catalyzes the oxidation of methanethiol. Can also degrade ethanethiol, but not methanol, methylamine or dimethylsulfide. The sequence is that of Methanethiol oxidase from Hyphomicrobium sp.